A 134-amino-acid chain; its full sequence is Small ribosomal subunit protein uS8 (134 aa).

The protein belongs to the universal ribosomal protein uS8 family. Part of the 30S ribosomal subunit. Contacts proteins S5 and S12.

In terms of biological role, one of the primary rRNA binding proteins, it binds directly to 16S rRNA central domain where it helps coordinate assembly of the platform of the 30S subunit. The polypeptide is Small ribosomal subunit protein uS8 (Thermotoga sp. (strain RQ2)).